The following is a 761-amino-acid chain: Isocyanide synthase xanB (761 aa).

The segment at leucine 24–histidine 128 is disordered. Residues glutamate 36–glutamate 48 are compositionally biased toward low complexity. The span at threonine 93 to asparagine 102 shows a compositional bias: polar residues. Basic and acidic residues predominate over residues phenylalanine 115–proline 126.

It belongs to the isocyanide synthase family.

It functions in the pathway secondary metabolite biosynthesis. Its function is as follows. Isocyanide synthase; part of the gene cluster that mediates the biosynthesis of the isocyanide xanthocillin and its derivatives. The first step of the pathway consists in the conversion of tyrosine into a vinyl-isonitrile intermediate by the isocyanide synthase xanB. Subsequent oxidative dimerization of this intermediate to form xanthocillin may involve the cytochrome P450 monooxygenase xanG, whose expression is coregulated with that of XanB. Xanthocillin can be further modified by the isonitrile hydratase-like protein xanA which introduces N-formyl groups and the methyltransferase xanE which introduces methyl groups, leading to the production of several derivatives including fumiformamide. Finally, fumiformamide can be subject to both oxidative and reductive cyclization to yield melanocins E and F, respectively. In Aspergillus fumigatus (strain ATCC MYA-4609 / CBS 101355 / FGSC A1100 / Af293) (Neosartorya fumigata), this protein is Isocyanide synthase xanB.